Reading from the N-terminus, the 391-residue chain is Tryptophan synthase beta chain (391 aa).

Position 84 is an N6-(pyridoxal phosphate)lysine (Lys84).

It belongs to the TrpB family. Tetramer of two alpha and two beta chains. Pyridoxal 5'-phosphate serves as cofactor.

The enzyme catalyses (1S,2R)-1-C-(indol-3-yl)glycerol 3-phosphate + L-serine = D-glyceraldehyde 3-phosphate + L-tryptophan + H2O. It participates in amino-acid biosynthesis; L-tryptophan biosynthesis; L-tryptophan from chorismate: step 5/5. In terms of biological role, the beta subunit is responsible for the synthesis of L-tryptophan from indole and L-serine. The polypeptide is Tryptophan synthase beta chain (Thermoanaerobacter pseudethanolicus (strain ATCC 33223 / 39E) (Clostridium thermohydrosulfuricum)).